The chain runs to 204 residues: MQSALVGSWHNNGFYGHYRSQFKSESAREYHLAAKPQPPAVFLQRCQEPAQRHFFSKHDNRTSFDKGPYCLLQGIGRRKDLERLWQRHTFLRWAPCEIELRQQGPLESSYQADFRPGPGLSGLPQHLIHFVQVQPSHTRTTYQQNFCCPSQGGHYGSYKVGPQAPVTDVLPDLPGIPRPKLLQHYLHAGVSECLNWSRALNKDS.

Its subcellular location is the cell projection. It is found in the cilium. This is Ciliary microtubule inner protein 7 from Homo sapiens (Human).